We begin with the raw amino-acid sequence, 342 residues long: Eukaryotic translation initiation factor 3 subunit F (342 aa).

The 137-residue stretch at Val-30–Gly-166 folds into the MPN domain. Residues Thr-310–Ala-342 form a disordered region. The segment covering Gly-317–Arg-331 has biased composition (basic and acidic residues).

This sequence belongs to the eIF-3 subunit F family. In terms of assembly, component of the eukaryotic translation initiation factor 3 (eIF-3) complex.

Its subcellular location is the cytoplasm. Functionally, component of the eukaryotic translation initiation factor 3 (eIF-3) complex, which is involved in protein synthesis of a specialized repertoire of mRNAs and, together with other initiation factors, stimulates binding of mRNA and methionyl-tRNAi to the 40S ribosome. The eIF-3 complex specifically targets and initiates translation of a subset of mRNAs involved in cell proliferation. The sequence is that of Eukaryotic translation initiation factor 3 subunit F from Phaeosphaeria nodorum (strain SN15 / ATCC MYA-4574 / FGSC 10173) (Glume blotch fungus).